The chain runs to 439 residues: Probable aspartic proteinase GIP2 (439 aa).

The N-terminal stretch at 1-23 (MASSCCLHAILLCSLLFITSTTA) is a signal peptide. Positions 47-420 (YLTQIQQRTP…DLARSRLGFT (374 aa)) constitute a Peptidase A1 domain. Residues asparagine 116, asparagine 280, asparagine 323, and asparagine 434 are each glycosylated (N-linked (GlcNAc...) asparagine).

This sequence belongs to the peptidase A1 family. Interacts with the Phytophtora parasitica xyloglucanase XEG1 and xyloglucanase-like XLP1. Possesses stronger binding affinity with XLP1, a truncated paralog of P.parasitica XEG1 which has no enzyme activity.

The protein localises to the secreted. It localises to the extracellular space. The protein resides in the apoplast. Functionally, involved in plant defense against Phytophtora parasitica. Contributes positively to Nicotiana resistance against P.parasitica. Binds the P.parasitica xyloglucanase XEG1 and inhibits its cell wall degrading enzyme activity and its contribution as P.parasitica virulence factor. XEG1 acts as an important virulence factor during P.parasitica infection but also acts as a pathogen-associated molecular pattern (PAMP) in Nictotiana species, where it can trigger defense responses including cell death. Its function is as follows. (Microbial infection) Possesses stronger binding affinity with XLP1, a truncated paralog of P.parasitica XEG1 which has no enzyme activity. Is impaired in its inhibitor activity towards the P.parasitica xyloglucanase XEG1 when hijacked by XLP1 binding. The protein is Probable aspartic proteinase GIP2 of Nicotiana benthamiana.